Here is a 329-residue protein sequence, read N- to C-terminus: tRNA-modifying protein YgfZ (329 aa).

Folate-binding residues include W28 and W188.

Belongs to the tRNA-modifying YgfZ family.

The protein localises to the cytoplasm. Functionally, folate-binding protein involved in regulating the level of ATP-DnaA and in the modification of some tRNAs. It is probably a key factor in regulatory networks that act via tRNA modification, such as initiation of chromosomal replication. In Photorhabdus laumondii subsp. laumondii (strain DSM 15139 / CIP 105565 / TT01) (Photorhabdus luminescens subsp. laumondii), this protein is tRNA-modifying protein YgfZ.